The primary structure comprises 205 residues: Regulator of G-protein signaling 4 (205 aa).

S-palmitoyl cysteine attachment occurs at residues Cys2, Cys12, and Cys95. One can recognise an RGS domain in the interval 62-178 (SLENLINHEC…LKSRFYLDLT (117 aa)).

Either Cys-2 or Cys-12 or both are palmitoylated. Post-translationally, phosphorylated by cyclic GMP-dependent protein kinase.

Its function is as follows. Inhibits signal transduction by increasing the GTPase activity of G protein alpha subunits thereby driving them into their inactive GDP-bound form. Activity on G(z)-alpha is inhibited by phosphorylation of the G-protein. Activity on G(z)-alpha and G(i)-alpha-1 is inhibited by palmitoylation of the G-protein. This Rattus norvegicus (Rat) protein is Regulator of G-protein signaling 4 (Rgs4).